A 416-amino-acid chain; its full sequence is PRKCA-binding protein (416 aa).

One can recognise a PDZ domain in the interval 22–105 (KVTLQKDAQN…EVTIHYNKLQ (84 aa)). Cys44 and Cys46 together coordinate Zn(2+). Thr82 bears the Phosphothreonine mark. Positions 144-357 (LCNDGLVKRL…CYAVLQDADV (214 aa)) constitute an AH domain. The disordered stretch occupies residues 373 to 416 (PNQGSFTDGEEEDEEEEDGAAREVSKDACGATGPTDKGGSWCDS). The span at 380-390 (DGEEEDEEEED) shows a compositional bias: acidic residues. Cys414 carries the S-palmitoyl cysteine; by DHHC8 lipid modification.

Monomer and homodimer. Interacts with CXADR. Interacts presynaptically with the glutamate receptors GRIA2, GRIA3, GRIK3, isoform 3 of GRIA4, isoform A of GRM4, GRM7 and GRM8; with NAPA and NAPB; and with BTG2. The interaction with NAPA and NAPB disrupts the interaction with GRIA2, conducting to the internalization of GRIA2. Interacts with PRKCA; with the amine transporters SLC6A2 and SLC6A3; with the channels ASIC1 and ASIC2; with the GTP-binding proteins ARF1 and ARF3; with the ephrin receptor tyrosine kinases EPHA7, EPHB1 and EPHB2; with ERBB2 and through its PDZ domain with the C-terminal tail of PRLHR. Interacts with UNC5A. Interacts (via AH domain) with NCS1/FREQ; in a calcium-dependent manner. Interacts with F-actin and associates with the ARP2/3 complex. Interacts (via PDZ domain) with ARF1 (activated); the interaction blocks Arp2/3 complex inhibition. Interacts with SORCS3. In terms of processing, phosphorylation at Thr-82 appears to inhibit the interaction with AMPA receptors. Phosphorylated on tyrosine residues by EPHB2 and on serine or threonine residues by PKC. Palmitoylation on Cys-414 is essential for long-term synaptic depression (LTD). As to expression, expressed in all tissues examined, with highest levels in brain and testes and lowest levels in lung.

The protein localises to the cytoplasm. It localises to the perinuclear region. Its subcellular location is the membrane. The protein resides in the postsynaptic density. It is found in the synapse. The protein localises to the synaptosome. It localises to the cytoskeleton. Probable adapter protein that bind to and organize the subcellular localization of a variety of membrane proteins containing some PDZ recognition sequence. Involved in the clustering of various receptors, possibly by acting at the receptor internalization level. Plays a role in synaptic plasticity by regulating the trafficking and internalization of AMPA receptors. May be regulated upon PRKCA activation. May regulate ASIC1/ASIC3 channel. Regulates actin polymerization by inhibiting the actin-nucleating activity of the Arp2/3 complex; the function is competitive with nucleation promoting factors and is linked to neuronal morphology regulation and AMPA receptor (AMPAR) endocytosis. Via interaction with the Arp2/3 complex involved in regulation of synaptic plasicity of excitatory synapses and required for spine shrinkage during long-term depression (LTD). Involved in regulation of astrocyte morphology, antagonistic to Arp2/3 complex activator WASL/N-WASP function. This chain is PRKCA-binding protein (Pick1), found in Mus musculus (Mouse).